Reading from the N-terminus, the 185-residue chain is Elongation factor P (185 aa).

It belongs to the elongation factor P family.

It is found in the cytoplasm. The protein operates within protein biosynthesis; polypeptide chain elongation. Functionally, involved in peptide bond synthesis. Stimulates efficient translation and peptide-bond synthesis on native or reconstituted 70S ribosomes in vitro. Probably functions indirectly by altering the affinity of the ribosome for aminoacyl-tRNA, thus increasing their reactivity as acceptors for peptidyl transferase. The sequence is that of Elongation factor P from Oceanobacillus iheyensis (strain DSM 14371 / CIP 107618 / JCM 11309 / KCTC 3954 / HTE831).